A 65-amino-acid polypeptide reads, in one-letter code: Large ribosomal subunit protein bL35 (65 aa).

This sequence belongs to the bacterial ribosomal protein bL35 family.

In Oleidesulfovibrio alaskensis (strain ATCC BAA-1058 / DSM 17464 / G20) (Desulfovibrio alaskensis), this protein is Large ribosomal subunit protein bL35.